The chain runs to 227 residues: DNA repair protein RecO (227 aa).

The protein belongs to the RecO family.

Functionally, involved in DNA repair and RecF pathway recombination. The sequence is that of DNA repair protein RecO from Pseudomonas savastanoi pv. phaseolicola (strain 1448A / Race 6) (Pseudomonas syringae pv. phaseolicola (strain 1448A / Race 6)).